We begin with the raw amino-acid sequence, 325 residues long: Lipoyl synthase (325 aa).

The interval 1–31 (MANLIDNTARSAASDARAARHPEKQKRADTP) is disordered. Over residues 17-31 (RAARHPEKQKRADTP) the composition is skewed to basic and acidic residues. Residues cysteine 65, cysteine 70, cysteine 76, cysteine 91, cysteine 95, cysteine 98, and serine 304 each contribute to the [4Fe-4S] cluster site. The region spanning 77 to 293 (WEQKHATFMI…ETIARAKGFL (217 aa)) is the Radical SAM core domain.

This sequence belongs to the radical SAM superfamily. Lipoyl synthase family. [4Fe-4S] cluster serves as cofactor.

It localises to the cytoplasm. The enzyme catalyses [[Fe-S] cluster scaffold protein carrying a second [4Fe-4S](2+) cluster] + N(6)-octanoyl-L-lysyl-[protein] + 2 oxidized [2Fe-2S]-[ferredoxin] + 2 S-adenosyl-L-methionine + 4 H(+) = [[Fe-S] cluster scaffold protein] + N(6)-[(R)-dihydrolipoyl]-L-lysyl-[protein] + 4 Fe(3+) + 2 hydrogen sulfide + 2 5'-deoxyadenosine + 2 L-methionine + 2 reduced [2Fe-2S]-[ferredoxin]. The protein operates within protein modification; protein lipoylation via endogenous pathway; protein N(6)-(lipoyl)lysine from octanoyl-[acyl-carrier-protein]: step 2/2. In terms of biological role, catalyzes the radical-mediated insertion of two sulfur atoms into the C-6 and C-8 positions of the octanoyl moiety bound to the lipoyl domains of lipoate-dependent enzymes, thereby converting the octanoylated domains into lipoylated derivatives. The sequence is that of Lipoyl synthase from Maricaulis maris (strain MCS10) (Caulobacter maris).